Here is a 134-residue protein sequence, read N- to C-terminus: Inner membrane protein YqjE (134 aa).

At 1 to 55 (MADTHHAQGPGKSVLGIGQRIVSIMVEMVETRLRLAVVELEEEKANLFQLLLMLG) the chain is on the cytoplasmic side. The chain crosses the membrane as a helical span at residues 56–76 (LTMLFAAFGLMSLMVLIIWAV). Over 77–83 (DPQYRLN) the chain is Periplasmic. A helical membrane pass occupies residues 84–104 (AMIATTVVLLLLALIGGIWTL). Residues 105–134 (RKSRKSTLLRHTRHELANDRQLLEEESREQ) lie on the Cytoplasmic side of the membrane.

The protein localises to the cell inner membrane. This is Inner membrane protein YqjE (yqjE) from Escherichia coli O157:H7.